Here is a 110-residue protein sequence, read N- to C-terminus: UPF0060 membrane protein Ping_0587 (110 aa).

The next 4 membrane-spanning stretches (helical) occupy residues 6–26, 33–53, 61–81, and 87–107; these read IFGI…LPYL, SIWL…LLTL, TYAA…WLVE, and MTDL…MFGP.

The protein belongs to the UPF0060 family.

Its subcellular location is the cell inner membrane. This chain is UPF0060 membrane protein Ping_0587, found in Psychromonas ingrahamii (strain DSM 17664 / CCUG 51855 / 37).